Here is a 683-residue protein sequence, read N- to C-terminus: MLLLKAKKAIIENLSEVSSTQAETDWDMSTPTIITNTSKSERTAYSKIGVIPSVNLYSSTLTSFCKLYHPLTLNQTQPQTGTLRLLPHEKPLILQDLSNYVKLLTSQNVCHDTEANTEYNAAVQTQKTSMECPTYLELRQFVINLSSFLNGCYVKRSTHIEPFQLQLILHTFYFLISIKSPESTNRLFDIFKEYFGLREMDPDMLQIFKQKASIFLIPRRHGKTWIVVAIISMLLTSVENIHVGYVAHQKHVANSVFTEIINTLQKWFPSRYIDIKKENGTIIYKSPDKKPSTLMCATCFNKNSIRGQTFNLLYIDEANFIKKDSLPAILGFMLQKDAKLIFISSVNSGDRATSFLFNLKNASEKMLNIVNYICPDHKDDFSLQDSLISCPCYKLYIPTYITIDETIKNTTNLFLDGAFTTELMGDMSGISKSNMHKVISEMAITQFDLCRADTTKPEITQCLNSTMYIYIDPAYTNNSEASGTGIGAILTFKNNSSKCIIVGMEHYFLKDLTGTATYQIASCACSLIRASLVLYPHIQCVHVAVEGNSSQDSAVAISTLINECSPIKVYFIHYKDKTTTMQWPIYMLGAEKSIAFESFIYAINSGTISASQSIISNTIKLSFDPISYLIEQIRSIRCYPLRDGSHTYCAKKRTVSDDVLVAVVMAYFFATSNKHIFKPLNST.

Residues 217–224 carry the Walker A motif motif; sequence IPRRHGKT. The short motif at 312-317 is the Walker B motif element; that stretch reads LLYIDE. Glutamate 317 acts as the For ATPase activity in catalysis. Catalysis depends on for nuclease activity residues aspartate 472, glutamate 546, and aspartate 658.

This sequence belongs to the herpesviridae TRM3 protein family. As to quaternary structure, interacts with the terminase subunits TRM1 and TRM2. Interacts with portal protein.

The protein resides in the host nucleus. Functionally, component of the molecular motor that translocates viral genomic DNA in empty capsid during DNA packaging. Forms a tripartite terminase complex together with TRM1 and TRM2 in the host cytoplasm. Once the complex reaches the host nucleus, it interacts with the capsid portal vertex. This portal forms a ring in which genomic DNA is translocated into the capsid. TRM3 carries an RNase H-like nuclease activity that plays an important role for the cleavage of concatemeric viral DNA into unit length genomes. The chain is Tripartite terminase subunit 3 from Saimiri sciureus (Common squirrel monkey).